A 269-amino-acid chain; its full sequence is Imidazoleglycerol-phosphate dehydratase 1, chloroplastic (269 aa).

Disordered stretches follow at residues methionine 1 to glycine 31 and serine 54 to arginine 73. The transit peptide at methionine 1 to serine 52 directs the protein to the chloroplast. Residues glutamate 83, histidine 109–histidine 117, histidine 135–glutamate 139, arginine 161, and arginine 183 contribute to the substrate site. Residues histidine 109, histidine 135, histidine 136, and glutamate 139 each contribute to the Mn(2+) site. 4 residues coordinate Mn(2+): histidine 207, histidine 231, histidine 232, and glutamate 235. Substrate contacts are provided by residues histidine 231–lysine 239 and serine 261–lysine 263.

Belongs to the imidazoleglycerol-phosphate dehydratase family. Mn(2+) serves as cofactor.

The protein localises to the plastid. It is found in the chloroplast. It carries out the reaction D-erythro-1-(imidazol-4-yl)glycerol 3-phosphate = 3-(imidazol-4-yl)-2-oxopropyl phosphate + H2O. It functions in the pathway amino-acid biosynthesis; L-histidine biosynthesis; L-histidine from 5-phospho-alpha-D-ribose 1-diphosphate: step 6/9. This chain is Imidazoleglycerol-phosphate dehydratase 1, chloroplastic, found in Triticum aestivum (Wheat).